The chain runs to 411 residues: Phospholipase A1-II 6 (411 aa).

Ser226 acts as the Acyl-ester intermediate in catalysis. Catalysis depends on charge relay system residues Ser226, Asp296, and His334.

This sequence belongs to the AB hydrolase superfamily. Lipase family.

The protein resides in the cytoplasm. Its function is as follows. Acylhydrolase that catalyzes the hydrolysis of phospholipids at the sn-1 position. The polypeptide is Phospholipase A1-II 6 (Oryza sativa subsp. japonica (Rice)).